A 193-amino-acid chain; its full sequence is Erythropoietin (193 aa).

A signal peptide spans 1–27 (MGVHECPAWLWLLLSLLSLPLGLPVLG). 2 disulfides stabilise this stretch: C34–C188 and C56–C60. Residue N51 is glycosylated (N-linked (GlcNAc...) asparagine). N-linked (GlcNAc...) asparagine glycosylation is found at N65 and N110. A glycan (O-linked (GalNAc...) serine) is linked at S153.

The protein belongs to the EPO/TPO family. In terms of tissue distribution, produced by kidney or liver of adult mammals and by liver of fetal or neonatal mammals.

The protein resides in the secreted. In terms of biological role, hormone involved in the regulation of erythrocyte proliferation and differentiation and the maintenance of a physiological level of circulating erythrocyte mass. Binds to EPOR leading to EPOR dimerization and JAK2 activation thereby activating specific downstream effectors, including STAT1 and STAT3. The polypeptide is Erythropoietin (EPO) (Homo sapiens (Human)).